The primary structure comprises 321 residues: Glucokinase (321 aa).

8–13 contacts ATP; the sequence is GDVGGT.

Belongs to the bacterial glucokinase family.

It localises to the cytoplasm. The enzyme catalyses D-glucose + ATP = D-glucose 6-phosphate + ADP + H(+). This chain is Glucokinase, found in Psychromonas ingrahamii (strain DSM 17664 / CCUG 51855 / 37).